Consider the following 431-residue polypeptide: Dihydroorotase (431 aa).

Zn(2+) contacts are provided by histidine 59 and histidine 61. Substrate is bound by residues 61 to 63 (HLR) and asparagine 93. Zn(2+) is bound by residues aspartate 151, histidine 178, histidine 231, and aspartate 304. The active site involves aspartate 304. Substrate is bound by residues histidine 308 and 322–323 (FG).

The protein belongs to the metallo-dependent hydrolases superfamily. DHOase family. Class I DHOase subfamily. Zn(2+) serves as cofactor.

The catalysed reaction is (S)-dihydroorotate + H2O = N-carbamoyl-L-aspartate + H(+). Its pathway is pyrimidine metabolism; UMP biosynthesis via de novo pathway; (S)-dihydroorotate from bicarbonate: step 3/3. In terms of biological role, catalyzes the reversible cyclization of carbamoyl aspartate to dihydroorotate. The sequence is that of Dihydroorotase from Thermoanaerobacter sp. (strain X514).